The chain runs to 768 residues: WD repeat-containing protein 20 homolog (768 aa).

Residues 103–122 (ESPEAVAPTSSTYEHHKNEP) are disordered. WD repeat units lie at residues 224 to 264 (IEKT…ASSN), 302 to 342 (IGEG…LLAV), 345 to 384 (SYFG…VVCR), and 454 to 497 (CSLA…LNQG). The interval 531 to 608 (VSPGGAGVNA…VNSESSKKQN (78 aa)) is disordered. Residues 539-553 (NASSDSQSITNNHTT) are compositionally biased toward polar residues. Low complexity predominate over residues 570 to 582 (FSKFTSGSSSATS). Polar residues predominate over residues 595 to 608 (NGASVNSESSKKQN). The WD 5 repeat unit spans residues 646–683 (VSHDRLTVLEFREDCVVTACQEGYICTWGRPGRYQPKR). Residues 684–749 (DCINSPGTAS…PNITSPSYRV (66 aa)) form a disordered region. Residues 688-712 (SPGTASPESGQKPSGSTSAMTSSYG) show a composition bias toward polar residues. The segment covering 724–733 (SRSSSTYSNS) has biased composition (low complexity). Residues 734–749 (EQQLRSPNITSPSYRV) are compositionally biased toward polar residues.

As to quaternary structure, interacts with usp-46; the interaction increases the catalytic activity of usp-46 in the presence of wdr-48. As to expression, expressed in several neurons in the head and tail.

Its function is as follows. Together with wdr-48, binds to and stimulates the activity of the deubiquitinating enzyme usp-46, leading to deubiquitination and stabilization of the glr-1 glutamate receptor. This Caenorhabditis elegans protein is WD repeat-containing protein 20 homolog.